A 92-amino-acid chain; its full sequence is Protein OP-ORF (92 aa).

Residues 53 to 82 (KMLAATISILEEEVTELVTELNNTTNLTAK) are a coiled coil.

This Rice dwarf virus (isolate Fujian) (RDV) protein is Protein OP-ORF.